We begin with the raw amino-acid sequence, 261 residues long: Undecaprenyl-diphosphatase (261 aa).

8 helical membrane-spanning segments follow: residues Met-1 to Ile-21, Gly-40 to Trp-60, Gly-79 to Phe-99, Ile-106 to Trp-126, Val-140 to Val-160, Phe-185 to Leu-205, Leu-210 to Leu-230, and Tyr-239 to Leu-259.

The protein belongs to the UppP family.

Its subcellular location is the cell membrane. It carries out the reaction di-trans,octa-cis-undecaprenyl diphosphate + H2O = di-trans,octa-cis-undecaprenyl phosphate + phosphate + H(+). Its function is as follows. Catalyzes the dephosphorylation of undecaprenyl diphosphate (UPP). Confers resistance to bacitracin. This is Undecaprenyl-diphosphatase from Moorella thermoacetica (strain ATCC 39073 / JCM 9320).